The following is a 257-amino-acid chain: Beta-fibrinogenase mucrofibrase-3 (257 aa).

The N-terminal stretch at 1–18 (MVLIRVLANLLILQLSYA) is a signal peptide. Positions 19–24 (QKSSEL) are excised as a propeptide. A Peptidase S1 domain is found at 25 to 248 (VIGGDECNIN…HLDWIKGIIA (224 aa)). 6 disulfide bridges follow: cysteine 31-cysteine 162, cysteine 49-cysteine 65, cysteine 97-cysteine 255, cysteine 141-cysteine 209, cysteine 173-cysteine 188, and cysteine 199-cysteine 224. Residues histidine 64 and aspartate 109 each act as charge relay system in the active site. The active-site Charge relay system is serine 203.

Belongs to the peptidase S1 family. Snake venom subfamily. Monomer. Expressed by the venom gland.

It is found in the secreted. In terms of biological role, snake venom serine protease with fibrinogenolytic activities. Cleaves beta-chain of fibrinogen (FGB) efficiently and shows relatively lower activity on alpha-chain. The sequence is that of Beta-fibrinogenase mucrofibrase-3 from Protobothrops mucrosquamatus (Taiwan habu).